The primary structure comprises 331 residues: MSEILLLLHPTVVTEESLVESAKSGLSGKFPEASLTQHIIDRIANDMVELPSSHFDHIHYVNPNKSHLSIPPSVMAKLFASLKNGGELSGDLPKDQDLDVLMNGFIVKDDGSWSKPAPVSTVLLRKKKPAETAARKMPTFKKPVSSPVTLTDTSANNTDAEDDLSMKRKLDSTKLAYFSDDSSGEEDDLIDENELIADSHKFNVNIVVPKKCELPNGKKRKKACKDCTCGLKELEEQEEQATRNLQDTLLGKMAQSATLEAIKIEERLKKSQVQFSAQDLTEIDFTVEGKTGGCSSCALGDAFRCDGCPYLGLPPFKPGEVVTLDSFGEDI.

Positions 1–146 (MSEILLLLHP…MPTFKKPVSS (146 aa)) are N-terminal SAM-like domain. Residues 142–164 (KPVSSPVTLTDTSANNTDAEDDL) form a disordered region. Polar residues predominate over residues 146 to 158 (SPVTLTDTSANNT). A linker region spans residues 147-202 (PVTLTDTSANNTDAEDDLSMKRKLDSTKLAYFSDDSSGEEDDLIDENELIADSHKF). 4 residues coordinate [2Fe-2S] cluster: Cys212, Cys224, Cys227, and Cys229. The tract at residues 212–229 (CELPNGKKRKKACKDCTC) is fe-S binding site A. [4Fe-4S] cluster is bound by residues Cys294, Cys297, Cys305, and Cys308. 2 consecutive short sequence motifs (cx2C motif) follow at residues 294–297 (CSSC) and 305–308 (CDGC). The fe-S binding site B stretch occupies residues 294-308 (CSSCALGDAFRCDGC).

Belongs to the anamorsin family. In terms of assembly, monomer. Interacts with TAH18. Interacts with MIA40. It depends on [2Fe-2S] cluster as a cofactor. Requires [4Fe-4S] cluster as cofactor.

The protein localises to the cytoplasm. It is found in the mitochondrion intermembrane space. In terms of biological role, component of the cytosolic iron-sulfur (Fe-S) protein assembly (CIA) machinery required for the maturation of extramitochondrial Fe-S proteins. Part of an electron transfer chain functioning in an early step of cytosolic Fe-S biogenesis, facilitating the de novo assembly of a [4Fe-4S] cluster on the scaffold complex CFD1-NBP35. Electrons are transferred to DRE2 from NADPH via the FAD- and FMN-containing protein TAH18. TAH18-DRE2 are also required for the assembly of the diferric tyrosyl radical cofactor of ribonucleotide reductase (RNR), probably by providing electrons for reduction during radical cofactor maturation in the catalytic small subunit RNR2. This Clavispora lusitaniae (strain ATCC 42720) (Yeast) protein is Fe-S cluster assembly protein DRE2.